The sequence spans 162 residues: Corticoliberin-1 (162 aa).

The N-terminal stretch at 1-24 (MKLNFLVTTVALLVAFPPPYECRA) is a signal peptide. The propeptide occupies 25-119 (IDSSSNQPAT…ALDSEERERR (95 aa)). Residue phenylalanine 160 is modified to Phenylalanine amide.

The protein belongs to the sauvagine/corticotropin-releasing factor/urotensin I family.

It localises to the secreted. This hormone from hypothalamus regulates the release of corticotropin from pituitary gland. The polypeptide is Corticoliberin-1 (crf1) (Catostomus commersonii (White sucker)).